Consider the following 124-residue polypeptide: Alkaline proteinase inhibitor (124 aa).

Positions 1–24 (MKGTLTRAALAAGGMMVTSAVMAG) are cleaved as a signal peptide. Residues C47 and C70 are joined by a disulfide bond.

Belongs to the protease inhibitor I38 family. Monomer.

It is found in the periplasm. Its function is as follows. Inhibitor of the alkaline protease. Inhibits SMP by formation of a non-covalent complex with a molar ratio of 1:1 and shows a high specificity. In Serratia marcescens, this protein is Alkaline proteinase inhibitor (inh).